The sequence spans 61 residues: Small ribosomal subunit protein uS14 (61 aa).

The Zn(2+) site is built by cysteine 24, cysteine 27, cysteine 40, and cysteine 43.

This sequence belongs to the universal ribosomal protein uS14 family. Zinc-binding uS14 subfamily. In terms of assembly, part of the 30S ribosomal subunit. Contacts proteins S3 and S10. Requires Zn(2+) as cofactor.

Its function is as follows. Binds 16S rRNA, required for the assembly of 30S particles and may also be responsible for determining the conformation of the 16S rRNA at the A site. In Deinococcus geothermalis (strain DSM 11300 / CIP 105573 / AG-3a), this protein is Small ribosomal subunit protein uS14.